We begin with the raw amino-acid sequence, 207 residues long: ATP-dependent Clp protease proteolytic subunit (207 aa).

The active-site Nucleophile is S111. H136 is a catalytic residue.

The protein belongs to the peptidase S14 family. In terms of assembly, fourteen ClpP subunits assemble into 2 heptameric rings which stack back to back to give a disk-like structure with a central cavity, resembling the structure of eukaryotic proteasomes.

Its subcellular location is the cytoplasm. The catalysed reaction is Hydrolysis of proteins to small peptides in the presence of ATP and magnesium. alpha-casein is the usual test substrate. In the absence of ATP, only oligopeptides shorter than five residues are hydrolyzed (such as succinyl-Leu-Tyr-|-NHMec, and Leu-Tyr-Leu-|-Tyr-Trp, in which cleavage of the -Tyr-|-Leu- and -Tyr-|-Trp bonds also occurs).. Functionally, cleaves peptides in various proteins in a process that requires ATP hydrolysis. Has a chymotrypsin-like activity. Plays a major role in the degradation of misfolded proteins. This Psychromonas ingrahamii (strain DSM 17664 / CCUG 51855 / 37) protein is ATP-dependent Clp protease proteolytic subunit.